Consider the following 456-residue polypeptide: MENRRQDYILRVRYHNPLPPPPFPPKLINIPNPVKQYALPNFVSTLVQEKKIPIENDIELGMPLDLAGITGFFEGDTSWMHSDLSSVNLDPIDRSLLKVAGGSGSTHLEVPFLRRTEYISSEVARAASNRGNLRLTASTSKALAEQRGRSLREVPKQLEAINESFDVVQQPLEQLKHPTKPDLKPVSAWNLLPNTSMAGIQHLMLRVADDLSERSHSYSSLVNLQEGHNLTKRHEVALFMPSSAEGEEFLSYYLPSEETAEEIQAKVNDASADVHEPFVYNHFRNFDASMHVNSTGLEDLCLTFHTDKDHPEANQVLYTPIYARSTLKRRHVRAPVSLDAVDGIELSLRDLNDEESLQLKRARYDTFGLGNIKDLEEEEEKLRSVEGSLNEELSEEEKPAESREQLESAEQTNGVKPETQAQNMSASESQANSPAPPVEEGNTQPSPVEQLQNEED.

The tract at residues 382–456 is disordered; sequence LRSVEGSLNE…PVEQLQNEED (75 aa). The residue at position 388 (S388) is a Phosphoserine. The span at 396 to 406 shows a compositional bias: basic and acidic residues; sequence EEKPAESREQL. Composition is skewed to polar residues over residues 408-433 and 441-456; these read SAEQ…QANS and GNTQ…NEED.

It belongs to the PAF1 family.

The protein localises to the cytoplasm. It localises to the nucleus. The polypeptide is RNA polymerase II-associated protein 1 homolog (Schizosaccharomyces pombe (strain 972 / ATCC 24843) (Fission yeast)).